A 915-amino-acid polypeptide reads, in one-letter code: MAPPTPSPRPGPPPTPQAAMTTPLKTPASKHRLHFPAMTPRNGGGGGAAAGGTEHPVEVIGRIRNLAAGAGGASALEIAGGGTAVRVRGDAGGCRDFTLDGVSVSEEEDLEGFYRRFVRSRIEGVRVGAKCTVMVYGPTGSGKSHTMFGCAKQPGIVYRALRDILEGGGGGGGGVSGGGGEGDGRGEDDAGFGMGLFVQVAVLEIYNEEIYDLLVGSGANAKGNAPKARLEVMGKKAKNATYISGNEAGKISREVAKVEKRRIVKSTLCNERSSRSHCMIILDVPSVGGRLMLVDMAGSENIEAAGQTGFEAKMQTAKINQGNTALKRVVESIANGDSHVPFRDSKLTMLLQDSFEDDKSKILMILCASPDPKELHKTVSTLEYGAKAKCIIRAAHAATPRDKMSSEESSTMLNSRIVAMNQFIYNLQKENKLREKERNEAQSVLRKKEEELAQLRAKLKLIEGQGAAAKEEEINSKVMEKTQSLRTELMKMEEKMLRQQQELLALQQRLKEVEREKPVQQDIIGGRLLARLSEMSARADQSMSMDMSIDFDMGDQPAAQDVKVIKEDTRKQGQIWSQANTAGSCTSAVEQEDDVVRLSGYPEKVVLSTVFEEGDEEEDKDSGVEEEVCKEVVEESYVMQQPLAEPEDPATRNNRIQNIFRLCGNHRELAKKVQSPAKKAFGDENNEPAKQTFGDENKQQPAKRVFGDENKDPSAWGAIEPPMCDVRVTDSPVSSQLSPIVCQVVDDAKLPVSEQLKSCNALEAADENKENNASGQDGLLEVYIKWESGHLIKGLKLLSNSCLSDLRKLLEDHFEEAGSKQQQQFTFLLLGDPSGAPVSREKEAGVPISKLPSCNNQPNSYLACLRAVKKQPATEQMPFSPLESKLNSALNDVHLAALSPKVNPMSPNYIRELRA.

Pro residues predominate over residues 1 to 16 (MAPPTPSPRPGPPPTP). Disordered stretches follow at residues 1 to 28 (MAPP…KTPA) and 34 to 53 (HFPA…AGGT). Residues 56-391 (PVEVIGRIRN…LEYGAKAKCI (336 aa)) form the Kinesin motor domain. ATP is bound at residue 137–144 (GPTGSGKS). Residues 426 to 517 (NLQKENKLRE…QRLKEVEREK (92 aa)) adopt a coiled-coil conformation. Residues 676 to 718 (PAKKAFGDENNEPAKQTFGDENKQQPAKRVFGDENKDPSAWGA) form a disordered region.

Belongs to the TRAFAC class myosin-kinesin ATPase superfamily. Kinesin family. KIN-10 subfamily.

The chain is Kinesin-like protein KIN-10A from Oryza sativa subsp. japonica (Rice).